The sequence spans 540 residues: Phosphoenolpyruvate carboxykinase (ATP) (540 aa).

Position 65 (Arg-65) interacts with substrate. N6-acetyllysine is present on Lys-87. Tyr-207 and Lys-213 together coordinate substrate. Residues Lys-213, His-232, and 248–256 (GLSGTGKTT) contribute to the ATP site. The Mn(2+) site is built by Lys-213 and His-232. Residue Asp-269 coordinates Mn(2+). Residues Glu-297, Arg-333, 449 to 450 (RI), and Thr-455 each bind ATP. A substrate-binding site is contributed by Arg-333. At Lys-523 the chain carries N6-acetyllysine.

The protein belongs to the phosphoenolpyruvate carboxykinase (ATP) family. In terms of assembly, monomer. It depends on Mn(2+) as a cofactor.

The protein localises to the cytoplasm. The enzyme catalyses oxaloacetate + ATP = phosphoenolpyruvate + ADP + CO2. It functions in the pathway carbohydrate biosynthesis; gluconeogenesis. Involved in the gluconeogenesis. Catalyzes the conversion of oxaloacetate (OAA) to phosphoenolpyruvate (PEP) through direct phosphoryl transfer between the nucleoside triphosphate and OAA. In Shigella dysenteriae serotype 1 (strain Sd197), this protein is Phosphoenolpyruvate carboxykinase (ATP).